A 577-amino-acid chain; its full sequence is Arginine--tRNA ligase (577 aa).

The 'HIGH' region motif lies at 122–132 (PNVAKEMHVGH).

It belongs to the class-I aminoacyl-tRNA synthetase family. As to quaternary structure, monomer.

It is found in the cytoplasm. The enzyme catalyses tRNA(Arg) + L-arginine + ATP = L-arginyl-tRNA(Arg) + AMP + diphosphate. This Edwardsiella ictaluri (strain 93-146) protein is Arginine--tRNA ligase.